The following is a 72-amino-acid chain: Toxin Acra II-3 (72 aa).

The 64-residue stretch at 4–67 folds into the LCN-type CS-alpha/beta domain; that stretch reads PGNYPLDTRG…VWNAAKNYCK (64 aa). 3 disulfide bridges follow: C18–C41, C27–C46, and C31–C48.

This sequence belongs to the long (3 C-C) scorpion toxin superfamily. Sodium channel inhibitor family. Beta subfamily. In terms of tissue distribution, expressed by the venom gland.

It localises to the secreted. Functionally, binds to sodium channels (Nav) and affects the channel activation process. The chain is Toxin Acra II-3 from Androctonus crassicauda (Arabian fat-tailed scorpion).